We begin with the raw amino-acid sequence, 352 residues long: Rhodopsin (352 aa).

Residues 1–36 (MNGTEGPFFYIPMVNTTGIVRSPYEYPQYYLVNPAA) are Extracellular-facing. N-linked (GlcNAc...) asparagine glycosylation is found at N2 and N15. The chain crosses the membrane as a helical span at residues 37-61 (YACLGAYMFFLILVGFPVNFLTLYV). At 62 to 73 (TLEHKKLRTPLN) the chain is on the cytoplasmic side. A helical membrane pass occupies residues 74 to 96 (YILLNLAVADLFMVFGGFTTTMY). At 97–110 (TSMHGYFVLGRLGC) the chain is on the extracellular side. A disulfide bridge connects residues C110 and C187. A helical transmembrane segment spans residues 111-133 (NIEGFFATLGGEIALWSLVVLAI). The 'Ionic lock' involved in activated form stabilization signature appears at 134–136 (ERW). The Cytoplasmic portion of the chain corresponds to 134 to 152 (ERWVVVCKPISNFRFGENH). The chain crosses the membrane as a helical span at residues 153-173 (AIMGVAFTWFMASACAVPPLV). Residues 174 to 202 (GWSRYIPEGMQCSCGVDYYTRAEGFNNES) are Extracellular-facing. N200 carries an N-linked (GlcNAc...) asparagine glycan. Residues 203–224 (FVIYMFIVHFCIPLAVVGFCYG) form a helical membrane-spanning segment. The Cytoplasmic segment spans residues 225–252 (RLLCAVKEAAAAQQESETTQRAEREVSR). The helical transmembrane segment at 253–274 (MVVIMVIGFLVCWLPYASVAWY) threads the bilayer. At 275–286 (IFTHQGSEFGPP) the chain is on the extracellular side. The chain crosses the membrane as a helical span at residues 287–308 (FMTVPAFFAKSSSIYNPMIYIC). K296 is subject to N6-(retinylidene)lysine. At 309-352 (MNKQFRHCMITTLCCGKNPFEEEEGASTTKTEASSVSSSSVSPA) the chain is on the cytoplasmic side. Residues C322 and C323 are each lipidated (S-palmitoyl cysteine). Residues 331-352 (EEGASTTKTEASSVSSSSVSPA) form a disordered region. The segment covering 342 to 352 (SSVSSSSVSPA) has biased composition (low complexity).

This sequence belongs to the G-protein coupled receptor 1 family. Opsin subfamily. Phosphorylated on some or all of the serine and threonine residues present in the C-terminal region. Post-translationally, contains one covalently linked retinal chromophore.

It is found in the membrane. It localises to the cell projection. The protein localises to the cilium. The protein resides in the photoreceptor outer segment. Photoreceptor required for image-forming vision at low light intensity. While most salt water fish species use retinal as chromophore, most freshwater fish use 3-dehydroretinal, or a mixture of retinal and 3-dehydroretinal. Light-induced isomerization of 11-cis to all-trans retinal triggers a conformational change that activates signaling via G-proteins. Subsequent receptor phosphorylation mediates displacement of the bound G-protein alpha subunit by arrestin and terminates signaling. This Zosterisessor ophiocephalus (Grass goby) protein is Rhodopsin (rho).